The primary structure comprises 863 residues: Scm-like with four MBT domains protein 1 (863 aa).

4 MBT repeats span residues 20–120 (FSWE…LEAP), 128–232 (SDWS…LQPP), 242–346 (ADWQ…INPP), and 354–451 (FDWA…LSTP). A disordered region spans residues 638 to 773 (KKKNKRIGRP…SDGENKPPSP (136 aa)). Residues 660–679 (KTSKRRKRRKNIFVHKKKRS) are compositionally biased toward basic residues. Residues 680–691 (SASVDNTPVGSP) are compositionally biased toward polar residues. Residues 696 to 710 (GEDEDDADDGDDDSL) are compositionally biased toward acidic residues. Residues S764 and S772 each carry the phosphoserine modification. The 69-residue stretch at 793–861 (WSVADVVRFI…RIKFAFYEQF (69 aa)) folds into the SAM domain.

Interacts with MYOD1. Component of the SLC (SFMBT1-LSD1-CoREST) corepressor complex, which also contains KDM1A/LSD1 and RCOR1/CoREST. Interacts with KDM1A/LSD1 and RCOR1/CoREST. Interacts with MYOD1. Interacts with L3MBTL3. Highly expressed in the testis, low expression was detected in brain, kidney, heart and lung.

It is found in the nucleus. Functionally, histone-binding protein, which is part of various corepressor complexes. Mediates the recruitment of corepressor complexes to target genes, followed by chromatin compaction and repression of transcription. Plays a role during myogenesis: required for the maintenance of undifferentiated states of myogenic progenitor cells via interaction with MYOD1. Interaction with MYOD1 leads to the recruitment of associated corepressors and silencing of MYOD1 target genes. Part of the SLC complex in germ cells, where it may play a role during spermatogenesis. The chain is Scm-like with four MBT domains protein 1 (Sfmbt1) from Rattus norvegicus (Rat).